A 432-amino-acid chain; its full sequence is Keratin, type I cytoskeletal 17 (432 aa).

The interval Met-1 to Ser-24 is disordered. A head region spans residues Met-1–Gly-83. Phosphoserine occurs at positions 12 and 13. Residue Lys-15 forms a Glycyl lysine isopeptide (Lys-Gly) (interchain with G-Cter in SUMO1); alternate linkage. Lys-15 participates in a covalent cross-link: Glycyl lysine isopeptide (Lys-Gly) (interchain with G-Cter in SUMO2); alternate. 3 positions are modified to phosphoserine: Ser-25, Ser-32, and Ser-39. Ser-44 carries the phosphoserine; by RPS6KA1 modification. The coil 1A stretch occupies residues Glu-84–Tyr-120. The region spanning Glu-84–Leu-395 is the IF rod domain. Residues Val-102 to Ile-116 are peptide epitope S1; induces T-cell and keratinocyte proliferation and IFN-gamma production. Thr-110 bears the Phosphothreonine mark. Residues Gln-121–Ile-138 are linker 1. Positions Glu-139 to Arg-230 are coil 1B. Positions Ala-153 to Asp-167 are peptide epitope S2; induces T-cell proliferation and IFN-gamma production. The interval Gly-231–Ser-250 is linker 12. The coil 2 stretch occupies residues Arg-251–Asp-392. Residue Lys-278 forms a Glycyl lysine isopeptide (Lys-Gly) (interchain with G-Cter in SUMO2) linkage. Thr-279 is modified (phosphothreonine). Position 323 is a phosphoserine (Ser-323). Residues Glu-332–Ile-346 form a peptide epitope S4; induces T-cell and keratinocyte proliferation and IFN-gamma production region. Residues Ala-393–Arg-432 form a tail region. Glycyl lysine isopeptide (Lys-Gly) (interchain with G-Cter in SUMO1); alternate cross-links involve residues Lys-399, Lys-400, and Lys-419. Glycyl lysine isopeptide (Lys-Gly) (interchain with G-Cter in SUMO2); alternate cross-links involve residues Lys-399, Lys-400, and Lys-419.

This sequence belongs to the intermediate filament family. As to quaternary structure, heterodimer of a type I and a type II keratin. KRT17 associates with KRT6 isomers (KRT6A or KRT6B). Interacts with TRADD and SFN. In terms of processing, phosphorylation at Ser-44 occurs in a growth- and stress-dependent fashion in skin keratinocytes, it has no effect on filament organization. Expressed in the outer root sheath and medulla region of hair follicle specifically from eyebrow and beard, digital pulp, nail matrix and nail bed epithelium, mucosal stratified squamous epithelia and in basal cells of oral epithelium, palmoplantar epidermis and sweat and mammary glands. Also expressed in myoepithelium of prostate, basal layer of urinary bladder, cambial cells of sebaceous gland and in exocervix (at protein level).

Its subcellular location is the cytoplasm. In terms of biological role, type I keratin involved in the formation and maintenance of various skin appendages, specifically in determining shape and orientation of hair. Required for the correct growth of hair follicles, in particular for the persistence of the anagen (growth) state. Modulates the function of TNF-alpha in the specific context of hair cycling. Regulates protein synthesis and epithelial cell growth through binding to the adapter protein SFN and by stimulating Akt/mTOR pathway. Involved in tissue repair. May be a marker of basal cell differentiation in complex epithelia and therefore indicative of a certain type of epithelial 'stem cells'. Acts as a promoter of epithelial proliferation by acting a regulator of immune response in skin: promotes Th1/Th17-dominated immune environment contributing to the development of basaloid skin tumors. May act as an autoantigen in the immunopathogenesis of psoriasis, with certain peptide regions being a major target for autoreactive T-cells and hence causing their proliferation. This is Keratin, type I cytoskeletal 17 (KRT17) from Homo sapiens (Human).